We begin with the raw amino-acid sequence, 197 residues long: Large ribosomal subunit protein uL11 (197 aa).

It belongs to the universal ribosomal protein uL11 family. Part of the ribosomal stalk of the 50S ribosomal subunit. Interacts with L10 and the large rRNA to form the base of the stalk. L10 forms an elongated spine to which L12 dimers bind in a sequential fashion forming a multimeric L10(L12)X complex. One or more lysine residues are methylated.

In terms of biological role, forms part of the ribosomal stalk which helps the ribosome interact with GTP-bound translation factors. The sequence is that of Large ribosomal subunit protein uL11 from Mycoplasma mobile (strain ATCC 43663 / 163K / NCTC 11711) (Mesomycoplasma mobile).